The primary structure comprises 78 residues: Large ribosomal subunit protein eL20 (78 aa).

The protein belongs to the eukaryotic ribosomal protein eL20 family. In terms of assembly, part of the 50S ribosomal subunit. Binds 23S rRNA.

This chain is Large ribosomal subunit protein eL20, found in Methanothermobacter thermautotrophicus (strain ATCC 29096 / DSM 1053 / JCM 10044 / NBRC 100330 / Delta H) (Methanobacterium thermoautotrophicum).